Reading from the N-terminus, the 361-residue chain is Probable mannose-1-phosphate guanylyltransferase 2 (361 aa).

Leu6 and Val7 together coordinate GDP-alpha-D-mannose. Residues Gly9, Gly11, Thr12, Arg13, and Lys23 each coordinate diphosphate. GDP-alpha-D-mannose is bound by residues Gly85, Asn109, Asp111, Gly146, and Asn173.

This sequence belongs to the transferase hexapeptide repeat family.

It carries out the reaction alpha-D-mannose 1-phosphate + GTP + H(+) = GDP-alpha-D-mannose + diphosphate. It participates in nucleotide-sugar biosynthesis; GDP-alpha-D-mannose biosynthesis; GDP-alpha-D-mannose from alpha-D-mannose 1-phosphate (GTP route): step 1/1. Functionally, catalyzes a reaction of the Smirnoff-Wheeler pathway, the major route to ascorbate biosynthesis in plants. The chain is Probable mannose-1-phosphate guanylyltransferase 2 from Oryza sativa subsp. japonica (Rice).